The chain runs to 412 residues: Probable ribonuclease FAU-1 (412 aa).

It belongs to the FAU-1 family.

In terms of biological role, probable RNase involved in rRNA stability through maturation and/or degradation of precursor rRNAs. Binds to RNA in loop regions with AU-rich sequences. The polypeptide is Probable ribonuclease FAU-1 (Sulfurisphaera tokodaii (strain DSM 16993 / JCM 10545 / NBRC 100140 / 7) (Sulfolobus tokodaii)).